Consider the following 136-residue polypeptide: MILGIGTDLCDIRRIENSLERFGERFTHRVFTDGEREKCDRRAARGPSYARRFAAKEACAKALGTGMSQGVFWRDMEVINAASGQPTLRLTGGAREHLARMVPPGHEARLHVTLTDEPPLAQAFVIIEAVPVAGAS.

Positions 8 and 57 each coordinate Mg(2+).

This sequence belongs to the P-Pant transferase superfamily. AcpS family. It depends on Mg(2+) as a cofactor.

Its subcellular location is the cytoplasm. The enzyme catalyses apo-[ACP] + CoA = holo-[ACP] + adenosine 3',5'-bisphosphate + H(+). Its function is as follows. Transfers the 4'-phosphopantetheine moiety from coenzyme A to a Ser of acyl-carrier-protein. This Methylorubrum populi (strain ATCC BAA-705 / NCIMB 13946 / BJ001) (Methylobacterium populi) protein is Holo-[acyl-carrier-protein] synthase.